The chain runs to 530 residues: Bifunctional purine biosynthesis protein PurH (530 aa).

The region spanning Met-1 to Val-148 is the MGS-like domain.

The protein belongs to the PurH family.

The enzyme catalyses (6R)-10-formyltetrahydrofolate + 5-amino-1-(5-phospho-beta-D-ribosyl)imidazole-4-carboxamide = 5-formamido-1-(5-phospho-D-ribosyl)imidazole-4-carboxamide + (6S)-5,6,7,8-tetrahydrofolate. The catalysed reaction is IMP + H2O = 5-formamido-1-(5-phospho-D-ribosyl)imidazole-4-carboxamide. It functions in the pathway purine metabolism; IMP biosynthesis via de novo pathway; 5-formamido-1-(5-phospho-D-ribosyl)imidazole-4-carboxamide from 5-amino-1-(5-phospho-D-ribosyl)imidazole-4-carboxamide (10-formyl THF route): step 1/1. The protein operates within purine metabolism; IMP biosynthesis via de novo pathway; IMP from 5-formamido-1-(5-phospho-D-ribosyl)imidazole-4-carboxamide: step 1/1. The sequence is that of Bifunctional purine biosynthesis protein PurH from Aeromonas salmonicida (strain A449).